Here is an 869-residue protein sequence, read N- to C-terminus: Rho GTPase-activating protein 27 (869 aa).

Positions 6 to 69 constitute an SH3 domain; the sequence is EGDVYVLVEH…PAQYVRELPA (64 aa). Residues 104-137 are disordered; that stretch reads GADGSSAEPRGRASSLCGPARQRTSGQRNSLAPG. Phosphoserine is present on residues S155, S215, and S249. 2 consecutive WW domains span residues 246-280 and 299-333; these read PRLSPVWETHTDAGTGRPYYYNPDTGVTTWESPFE and ESLETEWGQYWDEESGRVFFYNPLTGETVWEDETE. Disordered regions lie at residues 275 to 299, 331 to 389, and 447 to 474; these read WESPFEAPEGATSPTTSRASVGSGE, ETEE…DLGP, and VPVPAPRSGRKSSQDSDTPAQASPPEEK. Over residues 331 to 343 the composition is skewed to acidic residues; sequence ETEELEDDPEEQL. Residues 345 to 356 show a composition bias toward polar residues; the sequence is MQPSLSPRSPGQ. S350 carries the phosphoserine modification. One can recognise a WW 3 domain in the interval 414–447; sequence QFTQEQWVRLEDQEGKPYFYNPEDSSVQWELPQV. 2 positions are modified to phosphoserine: S459 and S462. A Phosphothreonine modification is found at T464. Phosphoserine is present on S469. Positions 477–593 constitute a PH domain; it reads TLDKAGVLHR…WHKAIAEGIE (117 aa). The disordered stretch occupies residues 598 to 644; sequence DLPQREEGEPSSADFGSSERLGSWKEEDVRPNAASPSLNPGSQESDL. Residues 631–642 are compositionally biased toward polar residues; that stretch reads ASPSLNPGSQES. S632 carries the phosphoserine modification. Residues 677–866 form the Rho-GAP domain; it reads CALAQLCERE…LILHQCADIF (190 aa).

As to quaternary structure, interacts with SH3KBP1/CIN85.

Its subcellular location is the cytoplasm. It localises to the membrane. Functionally, rho GTPase-activating protein which may be involved in clathrin-mediated endocytosis. GTPase activators for the Rho-type GTPases act by converting them to an inactive GDP-bound state. Has activity toward CDC42 and RAC1. This is Rho GTPase-activating protein 27 (Arhgap27) from Rattus norvegicus (Rat).